A 261-amino-acid polypeptide reads, in one-letter code: Ribonuclease HII (261 aa).

One can recognise an RNase H type-2 domain in the interval 71-259; sequence QYIAGVDEVG…VKEAKLHFES (189 aa). 3 residues coordinate a divalent metal cation: Asp-77, Glu-78, and Asp-169.

The protein belongs to the RNase HII family. Requires Mn(2+) as cofactor. Mg(2+) serves as cofactor.

It localises to the cytoplasm. The enzyme catalyses Endonucleolytic cleavage to 5'-phosphomonoester.. Endonuclease that specifically degrades the RNA of RNA-DNA hybrids. The sequence is that of Ribonuclease HII from Listeria innocua serovar 6a (strain ATCC BAA-680 / CLIP 11262).